A 138-amino-acid polypeptide reads, in one-letter code: Putative pre-16S rRNA nuclease (138 aa).

Belongs to the YqgF nuclease family.

It localises to the cytoplasm. Its function is as follows. Could be a nuclease involved in processing of the 5'-end of pre-16S rRNA. The protein is Putative pre-16S rRNA nuclease of Porphyromonas gingivalis (strain ATCC BAA-308 / W83).